Here is an 80-residue protein sequence, read N- to C-terminus: Exodeoxyribonuclease 7 small subunit (80 aa).

Belongs to the XseB family. Heterooligomer composed of large and small subunits.

It localises to the cytoplasm. The enzyme catalyses Exonucleolytic cleavage in either 5'- to 3'- or 3'- to 5'-direction to yield nucleoside 5'-phosphates.. Bidirectionally degrades single-stranded DNA into large acid-insoluble oligonucleotides, which are then degraded further into small acid-soluble oligonucleotides. This Escherichia coli (strain SE11) protein is Exodeoxyribonuclease 7 small subunit.